Consider the following 492-residue polypeptide: Probable glycine dehydrogenase (decarboxylating) subunit 2 (492 aa).

K274 is modified (N6-(pyridoxal phosphate)lysine).

It belongs to the GcvP family. C-terminal subunit subfamily. As to quaternary structure, the glycine cleavage system is composed of four proteins: P, T, L and H. In this organism, the P 'protein' is a heterodimer of two subunits. The cofactor is pyridoxal 5'-phosphate.

It carries out the reaction N(6)-[(R)-lipoyl]-L-lysyl-[glycine-cleavage complex H protein] + glycine + H(+) = N(6)-[(R)-S(8)-aminomethyldihydrolipoyl]-L-lysyl-[glycine-cleavage complex H protein] + CO2. The glycine cleavage system catalyzes the degradation of glycine. The P protein binds the alpha-amino group of glycine through its pyridoxal phosphate cofactor; CO(2) is released and the remaining methylamine moiety is then transferred to the lipoamide cofactor of the H protein. The protein is Probable glycine dehydrogenase (decarboxylating) subunit 2 of Exiguobacterium sibiricum (strain DSM 17290 / CCUG 55495 / CIP 109462 / JCM 13490 / 255-15).